The sequence spans 542 residues: Putative cysteine ligase BshC (542 aa).

Positions 458-487 (VAKNAAIIQAQIEFLQQTLERALLSKHEVE) form a coiled coil.

This sequence belongs to the BshC family.

Functionally, involved in bacillithiol (BSH) biosynthesis. May catalyze the last step of the pathway, the addition of cysteine to glucosamine malate (GlcN-Mal) to generate BSH. The chain is Putative cysteine ligase BshC from Geobacillus thermodenitrificans (strain NG80-2).